The chain runs to 264 residues: S-adenosylmethionine decarboxylase proenzyme (264 aa).

Serine 112 acts as the Schiff-base intermediate with substrate; via pyruvic acid in catalysis. Position 112 is a pyruvic acid (Ser); by autocatalysis (serine 112). Catalysis depends on histidine 117, which acts as the Proton acceptor; for processing activity. Catalysis depends on cysteine 140, which acts as the Proton donor; for catalytic activity.

This sequence belongs to the prokaryotic AdoMetDC family. Type 2 subfamily. In terms of assembly, heterooctamer of four alpha and four beta chains arranged as a tetramer of alpha/beta heterodimers. The cofactor is pyruvate. Post-translationally, is synthesized initially as an inactive proenzyme. Formation of the active enzyme involves a self-maturation process in which the active site pyruvoyl group is generated from an internal serine residue via an autocatalytic post-translational modification. Two non-identical subunits are generated from the proenzyme in this reaction, and the pyruvate is formed at the N-terminus of the alpha chain, which is derived from the carboxyl end of the proenzyme. The post-translation cleavage follows an unusual pathway, termed non-hydrolytic serinolysis, in which the side chain hydroxyl group of the serine supplies its oxygen atom to form the C-terminus of the beta chain, while the remainder of the serine residue undergoes an oxidative deamination to produce ammonia and the pyruvoyl group blocking the N-terminus of the alpha chain.

The enzyme catalyses S-adenosyl-L-methionine + H(+) = S-adenosyl 3-(methylsulfanyl)propylamine + CO2. It participates in amine and polyamine biosynthesis; S-adenosylmethioninamine biosynthesis; S-adenosylmethioninamine from S-adenosyl-L-methionine: step 1/1. Its function is as follows. Catalyzes the decarboxylation of S-adenosylmethionine to S-adenosylmethioninamine (dcAdoMet), the propylamine donor required for the synthesis of the polyamines spermine and spermidine from the diamine putrescine. This chain is S-adenosylmethionine decarboxylase proenzyme, found in Pectobacterium atrosepticum (strain SCRI 1043 / ATCC BAA-672) (Erwinia carotovora subsp. atroseptica).